The primary structure comprises 445 residues: Phosphoglucosamine mutase (445 aa).

S102 functions as the Phosphoserine intermediate in the catalytic mechanism. Positions 102, 241, 243, and 245 each coordinate Mg(2+). S102 is modified (phosphoserine).

The protein belongs to the phosphohexose mutase family. Mg(2+) is required as a cofactor. In terms of processing, activated by phosphorylation.

It carries out the reaction alpha-D-glucosamine 1-phosphate = D-glucosamine 6-phosphate. Catalyzes the conversion of glucosamine-6-phosphate to glucosamine-1-phosphate. This chain is Phosphoglucosamine mutase, found in Escherichia coli O139:H28 (strain E24377A / ETEC).